The sequence spans 922 residues: Phosphoenolpyruvate carboxylase (922 aa).

The tract at residues 1-20 (MTKTLHARPSAATDTTFAPP) is disordered. Catalysis depends on residues H142 and K581.

Belongs to the PEPCase type 1 family. The cofactor is Mg(2+).

It catalyses the reaction oxaloacetate + phosphate = phosphoenolpyruvate + hydrogencarbonate. Its function is as follows. Forms oxaloacetate, a four-carbon dicarboxylic acid source for the tricarboxylic acid cycle. The polypeptide is Phosphoenolpyruvate carboxylase (ppc) (Methylorubrum extorquens (strain ATCC 14718 / DSM 1338 / JCM 2805 / NCIMB 9133 / AM1) (Methylobacterium extorquens)).